Here is a 221-residue protein sequence, read N- to C-terminus: Phosphoribosylformylglycinamidine synthase subunit PurQ (221 aa).

The Glutamine amidotransferase type-1 domain occupies Asn-8 to Asp-221. The Nucleophile role is filled by Cys-91. Residues His-198 and Glu-200 contribute to the active site.

In terms of assembly, part of the FGAM synthase complex composed of 1 PurL, 1 PurQ and 2 PurS subunits.

The protein resides in the cytoplasm. It carries out the reaction N(2)-formyl-N(1)-(5-phospho-beta-D-ribosyl)glycinamide + L-glutamine + ATP + H2O = 2-formamido-N(1)-(5-O-phospho-beta-D-ribosyl)acetamidine + L-glutamate + ADP + phosphate + H(+). The enzyme catalyses L-glutamine + H2O = L-glutamate + NH4(+). It functions in the pathway purine metabolism; IMP biosynthesis via de novo pathway; 5-amino-1-(5-phospho-D-ribosyl)imidazole from N(2)-formyl-N(1)-(5-phospho-D-ribosyl)glycinamide: step 1/2. Its function is as follows. Part of the phosphoribosylformylglycinamidine synthase complex involved in the purines biosynthetic pathway. Catalyzes the ATP-dependent conversion of formylglycinamide ribonucleotide (FGAR) and glutamine to yield formylglycinamidine ribonucleotide (FGAM) and glutamate. The FGAM synthase complex is composed of three subunits. PurQ produces an ammonia molecule by converting glutamine to glutamate. PurL transfers the ammonia molecule to FGAR to form FGAM in an ATP-dependent manner. PurS interacts with PurQ and PurL and is thought to assist in the transfer of the ammonia molecule from PurQ to PurL. The protein is Phosphoribosylformylglycinamidine synthase subunit PurQ of Methanosphaera stadtmanae (strain ATCC 43021 / DSM 3091 / JCM 11832 / MCB-3).